The primary structure comprises 572 residues: Proline--tRNA ligase (572 aa).

This sequence belongs to the class-II aminoacyl-tRNA synthetase family. ProS type 1 subfamily. In terms of assembly, homodimer.

It is found in the cytoplasm. It catalyses the reaction tRNA(Pro) + L-proline + ATP = L-prolyl-tRNA(Pro) + AMP + diphosphate. In terms of biological role, catalyzes the attachment of proline to tRNA(Pro) in a two-step reaction: proline is first activated by ATP to form Pro-AMP and then transferred to the acceptor end of tRNA(Pro). As ProRS can inadvertently accommodate and process non-cognate amino acids such as alanine and cysteine, to avoid such errors it has two additional distinct editing activities against alanine. One activity is designated as 'pretransfer' editing and involves the tRNA(Pro)-independent hydrolysis of activated Ala-AMP. The other activity is designated 'posttransfer' editing and involves deacylation of mischarged Ala-tRNA(Pro). The misacylated Cys-tRNA(Pro) is not edited by ProRS. The protein is Proline--tRNA ligase of Haemophilus influenzae (strain PittEE).